We begin with the raw amino-acid sequence, 390 residues long: MDKNKHILIGICGGIASYKSVYIVSSLVKLGYKVKVIMTQNATKFITPLTLETISKNKIITNLWDLDHNEVEHIKIAKWAHLILVIPATYNTISKIASGIADDALTTIISASTAPTYFAIAMNNIMYSNPILKENIKKLKTYNYKFIEPDKGFLACSSNALGRLKNEDKIIKIILNEFNQKDYLKNKKILITASRTEELIDPIRYFSNTSTGKMGFCLAQEAVKLGAQVTIITGPTNENDPEGVNIIKIKTAMEMYKEALKIYNKFEIIIGAAAVADFKPKHIFNSKIKKNKINRLYIKLVKNPDIIQHIGHNKLKNQIVIGFCAENSKNLIQKAKEKLKKKNLDFIIANELKYFGSKLNKVYIINKQSIKELPEMEKSEVAKEILKILY.

A phosphopantothenoylcysteine decarboxylase region spans residues Met-1–Lys-188. Cys-156 functions as the Proton donor in the catalytic mechanism. Residues Ile-189–Tyr-390 form a phosphopantothenate--cysteine ligase region. CTP-binding positions include Asp-277, Lys-287, Pro-304 to Ile-307, Phe-323, Lys-338, and Lys-342.

It in the N-terminal section; belongs to the HFCD (homo-oligomeric flavin containing Cys decarboxylase) superfamily. In the C-terminal section; belongs to the PPC synthetase family. Mg(2+) is required as a cofactor. FMN serves as cofactor.

The enzyme catalyses N-[(R)-4-phosphopantothenoyl]-L-cysteine + H(+) = (R)-4'-phosphopantetheine + CO2. The catalysed reaction is (R)-4'-phosphopantothenate + L-cysteine + CTP = N-[(R)-4-phosphopantothenoyl]-L-cysteine + CMP + diphosphate + H(+). The protein operates within cofactor biosynthesis; coenzyme A biosynthesis; CoA from (R)-pantothenate: step 2/5. Its pathway is cofactor biosynthesis; coenzyme A biosynthesis; CoA from (R)-pantothenate: step 3/5. Its function is as follows. Catalyzes two sequential steps in the biosynthesis of coenzyme A. In the first step cysteine is conjugated to 4'-phosphopantothenate to form 4-phosphopantothenoylcysteine. In the second step the latter compound is decarboxylated to form 4'-phosphopantotheine. This chain is Coenzyme A biosynthesis bifunctional protein CoaBC, found in Borreliella burgdorferi (strain ATCC 35210 / DSM 4680 / CIP 102532 / B31) (Borrelia burgdorferi).